The chain runs to 61 residues: Metallothionein-II, hippocampal (61 aa).

Met1 carries the N-acetylmethionine modification. The beta stretch occupies residues 1-29 (MDPNCSCATGGSCTCANSCTCKACKCASC). The a divalent metal cation site is built by Cys5, Cys7, Cys13, Cys15, Cys19, Cys21, Cys24, Cys26, Cys29, Cys33, Cys34, Cys36, Cys37, Cys41, Cys44, Cys48, Cys50, Cys57, Cys59, and Cys60. Residues 30–61 (KKSCCSCCPVGCAKCAQGCICKGASDKCSCCA) form an alpha region.

This sequence belongs to the metallothionein superfamily. Type 1 family.

Its function is as follows. Metallothioneins have a high content of cysteine residues that bind various heavy metals; these proteins are transcriptionally regulated by both heavy metals and glucocorticoids. This isoform may play a role in regulating the transport, accumulation, and compartmentation of zinc in the hippocampus. The chain is Metallothionein-II, hippocampal from Bos taurus (Bovine).